The primary structure comprises 185 residues: Regulatory protein RecX (185 aa).

The protein belongs to the RecX family.

The protein localises to the cytoplasm. Functionally, modulates RecA activity. This Thermobifida fusca (strain YX) protein is Regulatory protein RecX.